The primary structure comprises 259 residues: Light-harvesting complex stress-related protein 3.1, chloroplastic (259 aa).

Residues 1–45 (MLANVVSRKASGLRQTPARATVAVKSVSGRRTTAAEPQTAAPVAA) constitute a chloroplast transit peptide. Tyrosine 51 is a chlorophyll b binding site. 3 residues coordinate chlorophyll a: phenylalanine 66, glutamate 87, and histidine 90. Arginine 92 lines the chlorophyll b pocket. Residues 93-113 (VAMLAALGFVVGEQLQDFPLF) traverse the membrane as a helical segment. A chlorophyll a-binding site is contributed by glutamine 130. A helical membrane pass occupies residues 137–157 (EPLLIAIGVAESYRVAVGWAT). Positions 147 and 150 each coordinate chlorophyll b. Residues lysine 196, glutamate 197, asparagine 200, arginine 202, and glutamine 214 each coordinate chlorophyll a. Residues 203 to 223 (LAMIAIAAFVAQELVEQTEIF) traverse the membrane as a helical segment.

Belongs to the light-harvesting chlorophyll a/b-binding (LHC) protein family. Interacts with the photosystem II-light-harvesting complex II (PSII-LHCII) supercomplex to form PSII-LHCII-LHCSR3 supercomplex.

The protein resides in the plastid. It is found in the chloroplast thylakoid membrane. Its function is as follows. Required for non-photochemical quenching (NPQ), a mechanism that converts and dissipates the harmful excess absorbed light energy into heat and protect the photosynthetic apparatus from photo-oxidative damage. NPQ includes dissipating excess light energy to heat (qE) and the reversible coupling of LHCII to photosystems (state transitions or qT), which are considered separate NPQ mechanisms. Is responsible for most of the excess light energy to heat dissipation (qE), also known as energy-dependent chlorophyll fluorescence quenching activity of chlorophyll excited states. Involved in a de-coupling and re-coupling of energy transfer to photosystem II (PSII) during qT. Binds chlorophyll a and b. Is able to sense luminal acidification of the thylakoid membranes, which occurs along with elevated electron flow caused by excess light. Establishes interactions with photosystem II (PSII) antenna components upon lumen acidification, and protonation of lumen-exposed, negatively charged residues both in LHCSR3 and in PSII antenna components. Mediates excitation energy transfer from light-harvesting complex II (LHCII) to photosystem I (PSI), rather than photosystem II (PSII), at low pH, which mimics the acidified lumen of the thylakoid membranes in high light-exposed chloroplasts. Activates PSI-dependent fluorescence quenching in addition to dissipating excitation energy in LHCII to avoid photooxidative stress under excess light. Contributes with PGRL1 to the regulation of electron flow upstream of photosystem I (PSI), and limits the accumulation of electrons on the PSI acceptor side, thus avoiding PSI photoinhibition. The protein is Light-harvesting complex stress-related protein 3.1, chloroplastic of Chlamydomonas reinhardtii (Chlamydomonas smithii).